The following is a 146-amino-acid chain: Zinc metalloproteinase-disintegrin salmosin-3 (146 aa).

The region spanning 1–57 (SCPCDANSCIMSATLSNEPSSRFSDCSFSLPSRFSDCSFNQYSSDIIHYHECLLNEP) is the Peptidase M12B domain. Disulfide bonds link Cys2-Cys37, Cys4-Cys9, Cys68-Cys87, Cys79-Cys97, Cys81-Cys92, Cys91-Cys114, Cys105-Cys111, Cys110-Cys135, and Cys123-Cys142. The Disintegrin domain maps to 65–146 (PPVCGNYYPE…GQSGVCPRNT (82 aa)). The Cell attachment site signature appears at 127–129 (RGD).

Belongs to the venom metalloproteinase (M12B) family. P-II subfamily. P-IIb sub-subfamily. Monomer (disintegrin). The cofactor is Zn(2+). In terms of tissue distribution, expressed by the venom gland.

Its subcellular location is the secreted. Its function is as follows. Snake venom zinc metalloproteinase that inhibits ADP-induced platelet aggregation (probably by binding integrin alpha-IIb/beta-3 (ITGA2B/ITGB3)) and degrades fibrinogen. This is Zinc metalloproteinase-disintegrin salmosin-3 from Gloydius brevicauda (Korean slamosa snake).